A 635-amino-acid polypeptide reads, in one-letter code: Isethionate TRAP transporter permease protein DctMQ (635 aa).

16 helical membrane passes run 38-58 (KPFL…QTLY), 75-95 (TEEM…PVAI), 117-137 (ISWI…LWQS), 154-174 (LQLP…LMAV), 192-212 (TVIG…ADYI), 217-237 (VLFG…IGLG), 266-286 (FPIM…AGGL), 299-319 (GALP…FAAI), 350-370 (AIVA…PFVV), 379-399 (IGKL…ALMA), 431-451 (WALM…MTPT), 453-473 (AAAL…RELS), 481-501 (VVEA…ATIF), 526-546 (IAIL…MEAL), 572-592 (IIMV…VNLF), and 609-629 (VLPL…VPAI).

This sequence in the N-terminal section; belongs to the TRAP transporter small permease family. It in the C-terminal section; belongs to the TRAP transporter large permease family. In terms of assembly, the complex comprises the periplasmic solute receptor protein DctP, and the fused transmembrane protein DctMQ.

It localises to the cell inner membrane. The protein operates within organosulfur degradation; alkanesulfonate degradation. Functionally, part of the tripartite ATP-independent periplasmic (TRAP) transport system DctPQM involved in the uptake of isethionate (2-hydroxyethanesulfonate), which is then catabolized by enzymes encoded by adjacent genes in the locus. Thereby is involved in an anaerobic respiration pathway that converts the sulfonate isethionate to ammonia, acetate and sulfide. The chain is Isethionate TRAP transporter permease protein DctMQ from Oleidesulfovibrio alaskensis (strain ATCC BAA-1058 / DSM 17464 / G20) (Desulfovibrio alaskensis).